A 375-amino-acid polypeptide reads, in one-letter code: Lipid-A-disaccharide synthase (375 aa).

This sequence belongs to the LpxB family.

It catalyses the reaction a lipid X + a UDP-2-N,3-O-bis[(3R)-3-hydroxyacyl]-alpha-D-glucosamine = a lipid A disaccharide + UDP + H(+). The protein operates within bacterial outer membrane biogenesis; LPS lipid A biosynthesis. Functionally, condensation of UDP-2,3-diacylglucosamine and 2,3-diacylglucosamine-1-phosphate to form lipid A disaccharide, a precursor of lipid A, a phosphorylated glycolipid that anchors the lipopolysaccharide to the outer membrane of the cell. In Pseudomonas putida (strain W619), this protein is Lipid-A-disaccharide synthase.